The primary structure comprises 309 residues: Fructosamine-3-kinase (309 aa).

The residue at position 1 (methionine 1) is an N-acetylmethionine. 89-91 (EHL) is a binding site for ATP. Aspartate 217 serves as the catalytic Proton acceptor.

The protein belongs to the fructosamine kinase family. As to quaternary structure, monomer. Widely expressed. Expressed in erythrocytes.

The enzyme catalyses N(6)-(D-fructosyl)-L-lysyl-[protein] + ATP = N(6)-(3-O-phospho-D-fructosyl)-L-lysyl-[protein] + ADP + H(+). It carries out the reaction N(6)-D-ribulosyl-L-lysyl-[protein] + ATP = N(6)-(3-O-phospho-D-ribulosyl)-L-lysyl-[protein] + ADP + H(+). The catalysed reaction is N(6)-(D-psicosyl)-L-lysyl-[protein] + ATP = N(6)-(3-O-phospho-D-psicosyl)-L-lysyl-[protein] + ADP + H(+). In terms of biological role, fructosamine-3-kinase involved in protein deglycation by mediating phosphorylation of fructoselysine residues on glycated proteins, to generate fructoselysine-3 phosphate. Fructoselysine-3 phosphate adducts are unstable and decompose under physiological conditions. Involved in intracellular deglycation in erythrocytes. Involved in the response to oxidative stress by mediating deglycation of NFE2L2/NRF2, glycation impairing NFE2L2/NRF2 function. Also able to phosphorylate psicosamines and ribulosamines. In Homo sapiens (Human), this protein is Fructosamine-3-kinase.